A 523-amino-acid chain; its full sequence is ATP synthase subunit alpha (523 aa).

179-186 (GDRQTGKT) provides a ligand contact to ATP.

This sequence belongs to the ATPase alpha/beta chains family. As to quaternary structure, F-type ATPases have 2 components, CF(1) - the catalytic core - and CF(0) - the membrane proton channel. CF(1) has five subunits: alpha(3), beta(3), gamma(1), delta(1), epsilon(1). CF(0) has three main subunits: a(1), b(2) and c(9-12). The alpha and beta chains form an alternating ring which encloses part of the gamma chain. CF(1) is attached to CF(0) by a central stalk formed by the gamma and epsilon chains, while a peripheral stalk is formed by the delta and b chains.

It is found in the cell inner membrane. The enzyme catalyses ATP + H2O + 4 H(+)(in) = ADP + phosphate + 5 H(+)(out). In terms of biological role, produces ATP from ADP in the presence of a proton gradient across the membrane. The alpha chain is a regulatory subunit. The chain is ATP synthase subunit alpha from Vibrio parahaemolyticus serotype O3:K6 (strain RIMD 2210633).